Consider the following 436-residue polypeptide: Putative actin-fragmin kinase DDB_G0268748 (436 aa).

A disordered region spans residues 14–58 (DKNIDSGSSSSNIGGSSSNSSGTTNKRSSGNFNGSSASSSPSSST). Residues 18-57 (DSGSSSSNIGGSSSNSSGTTNKRSSGNFNGSSASSSPSSS) show a composition bias toward low complexity.

This sequence belongs to the protein kinase superfamily. AFK Ser/Thr protein kinase family.

This chain is Putative actin-fragmin kinase DDB_G0268748, found in Dictyostelium discoideum (Social amoeba).